Here is a 244-residue protein sequence, read N- to C-terminus: Uridylate kinase (244 aa).

Position 15-18 (15-18 (KLSG)) interacts with ATP. The interval 23-28 (GSEGFG) is involved in allosteric activation by GTP. Gly-57 lines the UMP pocket. Gly-58 and Arg-62 together coordinate ATP. UMP-binding positions include Asp-77 and 138–145 (TGNPFFTT). ATP-binding residues include Thr-165, Phe-171, and Asp-174.

This sequence belongs to the UMP kinase family. As to quaternary structure, homohexamer.

Its subcellular location is the cytoplasm. It catalyses the reaction UMP + ATP = UDP + ADP. It participates in pyrimidine metabolism; CTP biosynthesis via de novo pathway; UDP from UMP (UMPK route): step 1/1. Allosterically activated by GTP. Inhibited by UTP. Its function is as follows. Catalyzes the reversible phosphorylation of UMP to UDP. This is Uridylate kinase from Aeromonas salmonicida (strain A449).